A 198-amino-acid polypeptide reads, in one-letter code: A-type ATP synthase subunit E (198 aa).

This sequence belongs to the V-ATPase E subunit family. In terms of assembly, has multiple subunits with at least A(3), B(3), C, D, E, F, H, I and proteolipid K(x).

It is found in the cell membrane. Functionally, component of the A-type ATP synthase that produces ATP from ADP in the presence of a proton gradient across the membrane. The polypeptide is A-type ATP synthase subunit E (Pyrococcus furiosus (strain ATCC 43587 / DSM 3638 / JCM 8422 / Vc1)).